The following is a 184-amino-acid chain: Photosystem I assembly protein Ycf4 (184 aa).

The next 2 membrane-spanning stretches (helical) occupy residues 21-43 (NYFW…VSSY) and 63-85 (GIVM…FTIF).

It belongs to the Ycf4 family.

It is found in the plastid. Its subcellular location is the chloroplast thylakoid membrane. In terms of biological role, seems to be required for the assembly of the photosystem I complex. This is Photosystem I assembly protein Ycf4 from Chaetosphaeridium globosum (Charophycean green alga).